We begin with the raw amino-acid sequence, 367 residues long: MAFKLWLLDEETIYEHVFERYTQLEGQSGKLAQDLGIQDRRGGVLEITFEPSGLEGGRKKKRVRRRNKASSVEEDQNVAVDSYHVSVGQSISSLHSSRDNGNSTTGYVLWSTTPFFINWLLYSTSAAPFRLGSQVEVTCGSSCEGHMLELPRLIDLTGADRGKRGILELGAGISGILPVILGNFVDTYVSTDQKGILNKLKDNIMENLSQLTRKRCISRSLRLELPTVEPVGDADITAASLPSKSTLHLEVAALDWEKINLQDKKTHSLHPELSLIGETCSSVYVIAMDVIYNEYLIDPFLKTLKQLKHWLQTTYNLQFHVLVGIHLRSQEVTTLFLEKAIIEYDLTVYDIVDQVIQESRFNFYLIT.

Residues 55–74 (EGGRKKKRVRRRNKASSVEE) are disordered. Residues 58 to 68 (RKKKRVRRRNK) are compositionally biased toward basic residues. Residues Trp110, 170-172 (GAG), Asp192, Trp256, and Met288 each bind S-adenosyl-L-methionine.

This sequence belongs to the class I-like SAM-binding methyltransferase superfamily. RKM5 family.

Its function is as follows. S-adenosyl-L-methionine-dependent protein-lysine N-methyltransferase that monomethylates 60S ribosomal protein L1 (RPL1A and RPL1B) at 'Lys-46'. This Saccharomyces cerevisiae (strain AWRI796) (Baker's yeast) protein is Ribosomal lysine N-methyltransferase 5 (RKM5).